Consider the following 754-residue polypeptide: 5-methyltetrahydropteroyltriglutamate--homocysteine methyltransferase (754 aa).

5-methyltetrahydropteroyltri-L-glutamate contacts are provided by residues 17–20 and K117; that span reads RELK. Residues 431-433 and E484 contribute to the L-homocysteine site; that span reads IGS. L-methionine contacts are provided by residues 431–433 and E484; that span reads IGS. 5-methyltetrahydropteroyltri-L-glutamate-binding positions include 515-516 and W561; that span reads RC. Residue D599 participates in L-homocysteine binding. D599 provides a ligand contact to L-methionine. E605 is a 5-methyltetrahydropteroyltri-L-glutamate binding site. The Zn(2+) site is built by H641, C643, and E665. Residue H694 is the Proton donor of the active site. Zn(2+) is bound at residue C726.

It belongs to the vitamin-B12 independent methionine synthase family. Zn(2+) is required as a cofactor.

It catalyses the reaction 5-methyltetrahydropteroyltri-L-glutamate + L-homocysteine = tetrahydropteroyltri-L-glutamate + L-methionine. Its pathway is amino-acid biosynthesis; L-methionine biosynthesis via de novo pathway; L-methionine from L-homocysteine (MetE route): step 1/1. Functionally, catalyzes the transfer of a methyl group from 5-methyltetrahydrofolate to homocysteine resulting in methionine formation. The sequence is that of 5-methyltetrahydropteroyltriglutamate--homocysteine methyltransferase from Klebsiella pneumoniae subsp. pneumoniae (strain ATCC 700721 / MGH 78578).